Consider the following 219-residue polypeptide: Imidazole glycerol phosphate synthase subunit HisH (219 aa).

A Glutamine amidotransferase type-1 domain is found at 2 to 218 (KVVVIDSGTG…MVWTPEGTSG (217 aa)). Cys-87 functions as the Nucleophile in the catalytic mechanism. Active-site residues include His-193 and Glu-195.

Heterodimer of HisH and HisF.

It localises to the cytoplasm. It catalyses the reaction 5-[(5-phospho-1-deoxy-D-ribulos-1-ylimino)methylamino]-1-(5-phospho-beta-D-ribosyl)imidazole-4-carboxamide + L-glutamine = D-erythro-1-(imidazol-4-yl)glycerol 3-phosphate + 5-amino-1-(5-phospho-beta-D-ribosyl)imidazole-4-carboxamide + L-glutamate + H(+). The enzyme catalyses L-glutamine + H2O = L-glutamate + NH4(+). It participates in amino-acid biosynthesis; L-histidine biosynthesis; L-histidine from 5-phospho-alpha-D-ribose 1-diphosphate: step 5/9. Functionally, IGPS catalyzes the conversion of PRFAR and glutamine to IGP, AICAR and glutamate. The HisH subunit catalyzes the hydrolysis of glutamine to glutamate and ammonia as part of the synthesis of IGP and AICAR. The resulting ammonia molecule is channeled to the active site of HisF. The sequence is that of Imidazole glycerol phosphate synthase subunit HisH from Granulibacter bethesdensis (strain ATCC BAA-1260 / CGDNIH1).